A 2049-amino-acid chain; its full sequence is Nonribosomal peptide synthetase tcpP (2049 aa).

Residues 13 to 395 (RHHAEAHPEA…LGRKDQLIKN (383 aa)) are adenylation 1. The Carrier 1 domain occupies 497–573 (ATADTKLSAL…EISNHIIEFD (77 aa)). Serine 534 is subject to O-(pantetheine 4'-phosphoryl)serine. The condensation 1 stretch occupies residues 605-913 (REITMTDVQR…ALGSKMDLLS (309 aa)). Positions 1071 to 1452 (VAAWPMSVAL…GRADHQVKVR (382 aa)) are adenylation 2. A Carrier 2 domain is found at 1550–1625 (DHTELVVSQV…SLAASVKKHL (76 aa)). O-(pantetheine 4'-phosphoryl)serine is present on serine 1585. The condensation 2 stretch occupies residues 1662 to 2044 (MHKQASNPSS…FEQEICNLLD (383 aa)).

The protein belongs to the NRP synthetase family.

Its pathway is secondary metabolite biosynthesis. Functionally, nonribosomal peptide synthetase; part of the gene cluster that mediates the biosynthesis of an unusual class of epipolythiodioxopiperazines (ETPs) lacking the reactive thiol group important for toxicity. Firstly, L-tyrosine is prenylated by tcpD, before undergoing condensation with L-glycine in a reaction catalyzed by the NRPS tcpP leading to the diketopiperazine (DKP) backbone. Afterwards the alpha-carbon of tyrosine is oxidized by the cytochrome P450 tcpC to form a hydroxyl group. However, in contrast other ETP biosynthesis pathways studied so far, tcpC is not able to bishydroxylate the DKP at both alpha-carbon positions, but hydroxylates the alpha-carbon of the tyrosine part and the nitrogen of the glycine part. The next steps involve an alpha,beta-elimination reaction catalyzed by tcpI, a methylation by the methyltransferase tcpN the action of the four enzyme cascade tcpG/K/J/I. Due to a dysfunctional cytochrome P450 monooxygenase tcpC, the pathway leads to the biosynthesis of probable non-toxic metabolites lacking the reactive thiol group. This is Nonribosomal peptide synthetase tcpP from Claviceps purpurea (strain 20.1) (Ergot fungus).